The primary structure comprises 300 residues: U1 small nuclear ribonucleoprotein 70 kDa homolog (300 aa).

The RRM domain occupies 107-198 (RTIFIGRLPY…RTVKYFKPRR (92 aa)). Disordered stretches follow at residues 204–248 (GGRG…AYSA) and 263–300 (NRPL…APDY). Over residues 265–279 (PLLSAATPTAAVTSV) the composition is skewed to low complexity.

As to quaternary structure, component of the spliceosome, where it is associated with snRNP U1. Binds stem loop I of U1 snRNA. Interacts with mRNA.

It is found in the nucleus. In terms of biological role, involved in nuclear mRNA splicing. The chain is U1 small nuclear ribonucleoprotein 70 kDa homolog (SNP1) from Saccharomyces cerevisiae (strain ATCC 204508 / S288c) (Baker's yeast).